The primary structure comprises 174 residues: uncharacterized protein (174 aa).

The protein belongs to the IIV-6 196R family.

This is an uncharacterized protein from Acheta domesticus (House cricket).